The following is a 305-amino-acid chain: Serine/threonine-protein phosphatase 6 catalytic subunit (305 aa).

4 residues coordinate Mn(2+): aspartate 54, histidine 56, aspartate 82, and asparagine 114. Histidine 115 (proton donor) is an active-site residue. Residues histidine 164 and histidine 238 each coordinate Mn(2+).

It belongs to the PPP phosphatase family. PP-6 (PP-V) subfamily. It depends on Mn(2+) as a cofactor.

It carries out the reaction O-phospho-L-seryl-[protein] + H2O = L-seryl-[protein] + phosphate. It catalyses the reaction O-phospho-L-threonyl-[protein] + H2O = L-threonyl-[protein] + phosphate. In Dictyostelium discoideum (Social amoeba), this protein is Serine/threonine-protein phosphatase 6 catalytic subunit (ppp6c).